Reading from the N-terminus, the 428-residue chain is GTPase Obg (428 aa).

One can recognise an Obg domain in the interval 1-158 (MFVDQVKIYV…RDVILELKVL (158 aa)). Positions 159 to 329 (ADVGLVGFPS…LLFEVANLLE (171 aa)) constitute an OBG-type G domain. Residues 165-172 (GFPSVGKS), 190-194 (FTTIV), 212-215 (DLPG), 282-285 (NKMD), and 310-312 (SAV) contribute to the GTP site. Residues S172 and T192 each contribute to the Mg(2+) site. The OCT domain maps to 350 to 428 (KLETEGVKFD…ILEYEFEFID (79 aa)).

It belongs to the TRAFAC class OBG-HflX-like GTPase superfamily. OBG GTPase family. As to quaternary structure, monomer. Mg(2+) is required as a cofactor.

The protein localises to the cytoplasm. In terms of biological role, an essential GTPase which binds GTP, GDP and possibly (p)ppGpp with moderate affinity, with high nucleotide exchange rates and a fairly low GTP hydrolysis rate. Plays a role in control of the cell cycle, stress response, ribosome biogenesis and in those bacteria that undergo differentiation, in morphogenesis control. The protein is GTPase Obg of Bacillus cereus (strain Q1).